Reading from the N-terminus, the 574-residue chain is ATP-grasp enzyme fsqD (574 aa).

The ATP-grasp domain occupies 234-462 (NKFLTSKYVG…YWGLAAVLGV (229 aa)). 263-318 (ALPYPLIVKPCDGWSSEGVSRVESPDAFPAAVKSIDTSRHGTEFVMEPYCDGPEVD) is a binding site for ATP. Residues Glu394, Glu431, and Asn433 each contribute to the Mg(2+) site. Positions 394, 431, and 433 each coordinate Mn(2+).

It depends on Mg(2+) as a cofactor. Mn(2+) is required as a cofactor.

Its pathway is secondary metabolite biosynthesis. Functionally, ATP-grasp enzyme; part of the gene cluster that mediates the biosynthesis of the isoquinoline alkaloids fumisoquin A, fumisoquin B and fumisoquin C; as well as small amounts of fumipyrrole as a shunt metabolite. The products of the cluster lead to a brown coloration and are important for growth and conidiation. The nonribosomal peptide synthetase-like protein fsqF, which lacks a canonical condensation domain, is required for addition of a serine-derived dehydroalanine moiety to activated tyrosine but is not essential for the subsequent steps leading to isoquinoline formation. A different enzyme, most likely the ATP-grasp enzyme fsqD, is responsible for activation of tyrosine. Three additional enzymes encoded by the fsq cluster, the N-methyltransferase fsqC, the phenol 2-monooxygenase fsqG and the FAD-dependent oxidase fsqB, catalyze the formation of the isoquinoline ring system in the fumisoquins. FsqB converts the fspF thiolation domain-bound (2S,4S,5S)-2-amino-6-(3,4-dihydroxyphenyl)-4-hydroxy-5-(methylamino)hexanoyl into isoquinoline. The cyclization most likely proceeds via a two-step mechanism, beginning with FAD-dependent oxidation of the methyl group to an iminium species followed by electrophilic attack on the deprotonated phenol. The protein is ATP-grasp enzyme fsqD of Aspergillus fumigatus (strain ATCC MYA-4609 / CBS 101355 / FGSC A1100 / Af293) (Neosartorya fumigata).